The sequence spans 573 residues: Proline--tRNA ligase (573 aa).

It belongs to the class-II aminoacyl-tRNA synthetase family. ProS type 1 subfamily. As to quaternary structure, homodimer.

The protein localises to the cytoplasm. It carries out the reaction tRNA(Pro) + L-proline + ATP = L-prolyl-tRNA(Pro) + AMP + diphosphate. Catalyzes the attachment of proline to tRNA(Pro) in a two-step reaction: proline is first activated by ATP to form Pro-AMP and then transferred to the acceptor end of tRNA(Pro). As ProRS can inadvertently accommodate and process non-cognate amino acids such as alanine and cysteine, to avoid such errors it has two additional distinct editing activities against alanine. One activity is designated as 'pretransfer' editing and involves the tRNA(Pro)-independent hydrolysis of activated Ala-AMP. The other activity is designated 'posttransfer' editing and involves deacylation of mischarged Ala-tRNA(Pro). The misacylated Cys-tRNA(Pro) is not edited by ProRS. The polypeptide is Proline--tRNA ligase (Elusimicrobium minutum (strain Pei191)).